The following is a 175-amino-acid chain: DASH complex subunit DAM1 (175 aa).

The interval 1 to 39 is disordered; it reads MAPEDTNPQSSHRRTRSTSRSRPTTPLRPSSRSSFRSSA. Positions 20 to 39 are enriched in low complexity; the sequence is RSRPTTPLRPSSRSSFRSSA.

Belongs to the DASH complex DAM1 family. Component of the DASH complex consisting of ASK1, DAD1, DAD2, DAD3, DAD4, DAM1, DUO1, HSK3, SPC19 and SPC34, with a stoichiometry of one copy of each subunit per complex. Multiple DASH complexes oligomerize to form a ring that encircles spindle microtubules and organizes the rod-like NDC80 complexes of the outer kinetochore. DASH complex oligomerization strengthens microtubule attachments. On cytoplasmic microtubules, DASH complexes appear to form patches instead of rings.

The protein resides in the chromosome. It is found in the centromere. It localises to the kinetochore. Its subcellular location is the cytoplasm. The protein localises to the cytoskeleton. The protein resides in the spindle. It is found in the nucleus. Component of the DASH complex that connects microtubules with kinetochores and couples microtubule depolymerisation to chromosome movement; it is involved in retrieving kinetochores to the spindle poles before their re-orientation on the spindle in early mitosis and allows microtubule depolymerization to pull chromosomes apart and resist detachment during anaphase. Kinetochores, consisting of a centromere-associated inner segment and a microtubule-contacting outer segment, play a crucial role in chromosome segregation by mediating the physical connection between centromeric DNA and microtubules. Kinetochores also serve as an input point for the spindle assembly checkpoint, which delays anaphase until all chromosomes have bioriented on the mitotic spindle. In Chaetomium thermophilum (strain DSM 1495 / CBS 144.50 / IMI 039719) (Thermochaetoides thermophila), this protein is DASH complex subunit DAM1.